Here is a 155-residue protein sequence, read N- to C-terminus: Rhombotin-1 (155 aa).

LIM zinc-binding domains lie at 21–83 (KGCA…LFGT) and 85–147 (GNCA…GQLN).

The protein resides in the nucleus. In terms of biological role, may be involved in gene regulation within neural lineage cells potentially by direct DNA binding or by binding to other transcription factors. The sequence is that of Rhombotin-1 from Danio rerio (Zebrafish).